Consider the following 286-residue polypeptide: 33 kDa chaperonin (286 aa).

Disulfide bonds link Cys225–Cys227 and Cys258–Cys261.

Belongs to the HSP33 family. Post-translationally, under oxidizing conditions two disulfide bonds are formed involving the reactive cysteines. Under reducing conditions zinc is bound to the reactive cysteines and the protein is inactive.

The protein localises to the cytoplasm. Redox regulated molecular chaperone. Protects both thermally unfolding and oxidatively damaged proteins from irreversible aggregation. Plays an important role in the bacterial defense system toward oxidative stress. In Shewanella woodyi (strain ATCC 51908 / MS32), this protein is 33 kDa chaperonin.